The following is a 430-amino-acid chain: Adenylosuccinate synthetase (430 aa).

GTP is bound by residues 12 to 18 (GDEGKGK) and 40 to 42 (GHT). The active-site Proton acceptor is Asp-13. 2 residues coordinate Mg(2+): Asp-13 and Gly-40. IMP-binding positions include 13–16 (DEGK), 38–41 (NAGH), Thr-128, Arg-142, Gln-223, Thr-238, and Arg-302. The active-site Proton donor is His-41. Position 298 to 304 (298 to 304 (TTTGRPR)) interacts with substrate. GTP-binding positions include Arg-304, 330 to 332 (SID), and 413 to 415 (SVG).

This sequence belongs to the adenylosuccinate synthetase family. In terms of assembly, homodimer. Mg(2+) is required as a cofactor.

Its subcellular location is the cytoplasm. It catalyses the reaction IMP + L-aspartate + GTP = N(6)-(1,2-dicarboxyethyl)-AMP + GDP + phosphate + 2 H(+). Its pathway is purine metabolism; AMP biosynthesis via de novo pathway; AMP from IMP: step 1/2. Functionally, plays an important role in the de novo pathway of purine nucleotide biosynthesis. Catalyzes the first committed step in the biosynthesis of AMP from IMP. In Lactococcus lactis subsp. cremoris (strain MG1363), this protein is Adenylosuccinate synthetase.